The primary structure comprises 319 residues: ATP-dependent 6-phosphofructokinase (319 aa).

An ATP-binding site is contributed by glycine 11. 21–25 serves as a coordination point for ADP; the sequence is RAVVR. Residues 72–73 and 102–105 contribute to the ATP site; these read RC and GDGS. Residue aspartate 103 participates in Mg(2+) binding. 125 to 127 contacts substrate; sequence TID. The active-site Proton acceptor is the aspartate 127. Arginine 154 lines the ADP pocket. Substrate-binding positions include arginine 162 and 169 to 171; that span reads MGR. Residues 185–187, lysine 211, and 213–215 each bind ADP; these read GAE and KMH. Residues glutamate 222, arginine 243, and 249–252 contribute to the substrate site; that span reads HIQR.

Belongs to the phosphofructokinase type A (PFKA) family. ATP-dependent PFK group I subfamily. Prokaryotic clade 'B1' sub-subfamily. As to quaternary structure, homotetramer. Mg(2+) serves as cofactor.

The protein localises to the cytoplasm. The catalysed reaction is beta-D-fructose 6-phosphate + ATP = beta-D-fructose 1,6-bisphosphate + ADP + H(+). It functions in the pathway carbohydrate degradation; glycolysis; D-glyceraldehyde 3-phosphate and glycerone phosphate from D-glucose: step 3/4. Allosterically activated by ADP and other diphosphonucleosides, and allosterically inhibited by phosphoenolpyruvate. In terms of biological role, catalyzes the phosphorylation of D-fructose 6-phosphate to fructose 1,6-bisphosphate by ATP, the first committing step of glycolysis. The chain is ATP-dependent 6-phosphofructokinase from Clostridium botulinum (strain 657 / Type Ba4).